The chain runs to 172 residues: Nascent polypeptide-associated complex subunit beta (172 aa).

Disordered regions lie at residues 36 to 58 (KTGK…GDDK) and 142 to 172 (QNMQ…DKVE). Basic residues predominate over residues 41–50 (TPRRKMKRAP). Residues 54 to 119 (GGDDKKLQQT…GEDKELTELV (66 aa)) form the NAC-A/B domain.

Belongs to the NAC-beta family. Part of the nascent polypeptide-associated complex (NAC), consisting of EGD2 and EGD1. NAC associates with ribosomes via EGD1.

It is found in the cytoplasm. Its subcellular location is the nucleus. Functionally, component of the nascent polypeptide-associated complex (NAC), a dynamic component of the ribosomal exit tunnel, protecting the emerging polypeptides from interaction with other cytoplasmic proteins to ensure appropriate nascent protein targeting. The NAC complex also promotes mitochondrial protein import by enhancing productive ribosome interactions with the outer mitochondrial membrane and blocks the inappropriate interaction of ribosomes translating non-secretory nascent polypeptides with translocation sites in the membrane of the endoplasmic reticulum. EGD1 may act as a transcription factor that exert a negative effect on the expression of several genes that are transcribed by RNA polymerase II. This is Nascent polypeptide-associated complex subunit beta (EGD1) from Pyricularia oryzae (strain 70-15 / ATCC MYA-4617 / FGSC 8958) (Rice blast fungus).